Reading from the N-terminus, the 195-residue chain is Interferon tau-9 (195 aa).

The N-terminal stretch at 1–23 (MAFVLSLLMALVLVSYGPGGSLG) is a signal peptide. 2 disulfide bridges follow: Cys24/Cys122 and Cys52/Cys162.

It belongs to the alpha/beta interferon family. IFN-alphaII subfamily. In terms of tissue distribution, constitutively and exclusively expressed in the mononuclear cells of the extraembryonic trophectoderm.

Its subcellular location is the secreted. Functionally, paracrine hormone primarily responsible for maternal recognition of pregnancy. Interacts with endometrial receptors, probably type I interferon receptors, and blocks estrogen receptor expression, preventing the estrogen-induced increase in oxytocin receptor expression in the endometrium. This results in the suppression of the pulsatile endometrial release of the luteolytic hormone prostaglandin F2-alpha, hindering the regression of the corpus luteum (luteolysis) and therefore a return to ovarian cyclicity. This, and a possible direct effect of IFN-tau on prostaglandin synthesis, leads in turn to continued ovarian progesterone secretion, which stimulates the secretion by the endometrium of the nutrients required for the growth of the conceptus. In summary, displays particularly high antiviral and antiproliferative potency concurrently with particular weak cytotoxicity, high antiluteolytic activity and immunomodulatory properties. In contrast with other IFNs, IFN-tau is not virally inducible. In Ovis aries (Sheep), this protein is Interferon tau-9 (IFNT9).